The following is a 386-amino-acid chain: Ovalbumin (386 aa).

Glycine 2 carries the N-acetylglycine modification. A signal peptide (not cleaved) is located at residues 22–48 (HHANENIFYSPFTIISALAMVYLGAKD). Serine 69 carries the phosphoserine modification. A disulfide bridge connects residues cysteine 74 and cysteine 121. N-linked (GlcNAc...) asparagine glycosylation is found at asparagine 293 and asparagine 312. The residue at position 345 (serine 345) is a Phosphoserine. N-linked (GlcNAc...) asparagine glycosylation is present at asparagine 372.

It belongs to the serpin family. Ov-serpin subfamily. Post-translationally, the signal sequence is not cleaved. The functional signal for membrane translocation of ovalbumin becomes accessible when the nascent chain is 50 to 60 residues long. The hydrophobic sequence which lies between residues 27 and 43 folds back on the preceding residues to form an amphipathic hairpin structure which is the signal element recognized by the membrane. In terms of tissue distribution, major protein of egg white.

It is found in the secreted. Its function is as follows. Storage protein of egg white. Lack protease inhibitory activity. In Meleagris gallopavo (Wild turkey), this protein is Ovalbumin (SERPINB14).